A 1066-amino-acid chain; its full sequence is MTSQEKVPFQVQLSLPQILSRRDWENPQITQYHRLEAHPPFHSWRDVESAQKDRPSPQQQTLNGLWSFSYFTQPEAVPEHWVRCDLAEAKPLPVPANWQLHGYDAPIYTNIQYPIPVNPPRVPDLNPTGCYSRDFTLEPSWLASGKTRIIFDGVSSAFYLWCNGQWVGYSQDSRLPAEFDLTPYLQAGSNRIAVLVLRWSDGSYLEDQDMWRMSGIFRDVKLLHKPEIHLRDIHIMTHLSPEFTSANLEVMAAVNIPSLQLNDPQVTGSYQLRVQLWLADKLVASLQQPLGTQAIDERGPYTDRTQLVLRIDQPLLWSAEQPTLYRAVVSLLNHQQELIEAEAYDVGFRQVAIHQGLLKINGKAVLIRGVNRHEHHPQTGQAIDEESLLQDILLMKQHNFNAVRCSHYPNHPLWYRLCDRYGLYVVDEANIETHGMQPMSRLSDDPSWFSAFSERVTRMVQRDRNHPCIIIWSLGNESGHGATHDALYRWIKTNDPTRPVQYEGGGANTLATDILCPMYARVDEDQPFPAVPKWSIKKWIGLPNESRPLILCEYAHAMGNSFGGFARYWQAFRQYPRLQGGFIWDWVDQSLTHHNDHGQPYWAYGGDFGDTPNDRQFCMNGLVFPDRSPHPSLYEAQCAQQFFQFSLLSTTPLVINITSEYLFRESDNEQLYWRIMLEGESVLEGSQPLNLSPESSQCYRLAEKLPTLNKPGQLWLNVEIRQPKETPWSPAQHRSAWHQWRLPQPLFSPSSDLTNATAHYAPQLQHNLQLQHNRQLQHDLQLQQDEQHIKVTYQQQCWQFSRQTGRLDQWWVADKPMLLRPLQDQFVRAPLDNDIGISEATHIDPNAWVERWKKAGMYQLQQRCLSLHVDHLSHSVQISAEYGYEFEQEPLLHSHWVYRFDRHGRMTIDVNVRIATSLPAPARIGMCCQLADISPTVEWLGLGPHENYPDRQLAAQYGHWSLPLEQMHTAYIFPSENGLRCNTHTLNYGRWTLTGDFHFGISRYSTQQLMVTSHQHLLEPEEGTWLNIDGFHMGVGGDDSWSPSVHIDDILTRETYQYQICWQYKV.

Residues Asn-110 and Asp-209 each coordinate substrate. Asp-209 contacts Na(+). Mg(2+)-binding residues include Glu-432, His-434, and Glu-477. Substrate contacts are provided by residues Glu-477 and 553-556 (EYAH). Glu-477 functions as the Proton donor in the catalytic mechanism. Glu-553 acts as the Nucleophile in catalysis. Asn-613 serves as a coordination point for Mg(2+). Residues Phe-617 and Asn-620 each contribute to the Na(+) site. Asn-620 and Trp-1041 together coordinate substrate.

This sequence belongs to the glycosyl hydrolase 2 family. In terms of assembly, homotetramer. Requires Mg(2+) as cofactor. It depends on Na(+) as a cofactor.

The enzyme catalyses Hydrolysis of terminal non-reducing beta-D-galactose residues in beta-D-galactosides.. The chain is Beta-galactosidase from Yersinia pseudotuberculosis serotype IB (strain PB1/+).